An 81-amino-acid chain; its full sequence is Large ribosomal subunit protein bL31B (81 aa).

Belongs to the bacterial ribosomal protein bL31 family. Type B subfamily. In terms of assembly, part of the 50S ribosomal subunit.

The protein is Large ribosomal subunit protein bL31B of Borreliella burgdorferi (strain ATCC 35210 / DSM 4680 / CIP 102532 / B31) (Borrelia burgdorferi).